Consider the following 175-residue polypeptide: Transcriptional regulator GadE (175 aa).

Residues His109–Tyr174 form the HTH luxR-type domain. Residues Glu133 to Phe152 constitute a DNA-binding region (H-T-H motif).

Its function is as follows. Regulates the expression of several genes involved in acid resistance. Required for the expression of gadA and gadBC, among others, regardless of media or growth conditions. Binds directly to the 20 bp GAD box found in the control regions of both loci. Could be involved in the regulation of the genes coding for the type III secretion system in enterohaemorragic strains. This Escherichia coli O157:H7 protein is Transcriptional regulator GadE (gadE).